The sequence spans 75 residues: CDC42 small effector protein 2-B (75 aa).

Residues C10 and C11 are each lipidated (S-palmitoyl cysteine). Positions 29–42 (IGEPMNFVHTAHVG) constitute a CRIB domain.

This sequence belongs to the CDC42SE/SPEC family.

The protein resides in the cytoplasm. The protein localises to the cytoskeleton. Its subcellular location is the cell membrane. In terms of biological role, probably involved in the organization of the actin cytoskeleton by acting downstream of CDC42, inducing actin filament assembly. This Xenopus laevis (African clawed frog) protein is CDC42 small effector protein 2-B (cdc42se2-b).